A 158-amino-acid polypeptide reads, in one-letter code: Transcription elongation factor GreA (158 aa).

It belongs to the GreA/GreB family.

Functionally, necessary for efficient RNA polymerase transcription elongation past template-encoded arresting sites. The arresting sites in DNA have the property of trapping a certain fraction of elongating RNA polymerases that pass through, resulting in locked ternary complexes. Cleavage of the nascent transcript by cleavage factors such as GreA or GreB allows the resumption of elongation from the new 3'terminus. GreA releases sequences of 2 to 3 nucleotides. The protein is Transcription elongation factor GreA of Yersinia pestis.